The primary structure comprises 629 residues: Ionotropic receptor 75a (629 aa).

Residues 1–335 (MQLVQLANFV…GDVFLQPFSP (335 aa)) are Extracellular-facing. N-linked (GlcNAc...) asparagine glycans are attached at residues Asn61, Asn112, Asn126, Asn144, Asn166, and Asn232. Residues 336–356 (LVWYLFGGVLSLIGVLLWITF) form a helical membrane-spanning segment. The Cytoplasmic segment spans residues 357–374 (YMECKRMQKRWRLDYLPS). Residues 375 to 395 (LLSTFLISFGAACIQSSSLIP) traverse the membrane as a helical segment. The Extracellular segment spans residues 396-402 (RSAGGRL). Residues 403–423 (IYFALFLISFIMYNYYTSVVV) form a helical membrane-spanning segment. Over 424–592 (SSLLSSPVKS…NFVITVGMEY (169 aa)) the chain is Cytoplasmic. Residues 593 to 613 (VAPLLLMLICADILVVVILLV) traverse the membrane as a helical segment. The Extracellular portion of the chain corresponds to 614–629 (ELAWKRFFTRHLTFHP).

The protein belongs to the glutamate-gated ion channel (TC 1.A.10.1) family. In terms of tissue distribution, expressed in acetic-acid-sensing neurons in the antennal coeloconic 2 (ac2) and antennal coeloconic 3 (ac3) sensilla class of sensory hairs (at protein level).

Its subcellular location is the cell membrane. The protein resides in the cell projection. The protein localises to the dendrite. Its function is as follows. Odorant receptor for acetic and propionic acid. Functions as part of an olfactory receptor complex including the ionotropic receptor coreceptor Ir8a. This Drosophila melanogaster (Fruit fly) protein is Ionotropic receptor 75a.